The primary structure comprises 54 residues: Potassium channel toxin alpha-KTx 14.2 (54 aa).

The N-terminal stretch at 1–23 (MKIFFAILLILAVCSMAIWTVNG) is a signal peptide. 3 cysteine pairs are disulfide-bonded: Cys-30–Cys-46, Cys-36–Cys-51, and Cys-40–Cys-53.

It belongs to the short scorpion toxin superfamily. Potassium channel inhibitor family. Alpha-KTx 14 subfamily. As to expression, expressed by the venom gland.

It is found in the secreted. In terms of biological role, inhibits potassium channels. May be active towards small conductance calcium-activated potassium channels (KCNN, SK), and less active towards voltage-gated potassium channels (Kv/KCN). In Olivierus martensii (Manchurian scorpion), this protein is Potassium channel toxin alpha-KTx 14.2.